The sequence spans 90 residues: Molybdopterin synthase sulfur carrier subunit (90 aa).

Gly-90 carries the post-translational modification 1-thioglycine; alternate. Gly-90 is subject to Glycyl adenylate; alternate.

The protein belongs to the MoaD family. MOCS2A subfamily. Heterotetramer; composed of 2 small (Mocs2A) and 2 large (Mocs2B) subunits. Post-translationally, C-terminal thiocarboxylation occurs in 2 steps, it is first acyl-adenylated (-COAMP) via the hesA/moeB/thiF part of MOCS3, then thiocarboxylated (-COSH) via the rhodanese domain of MOCS3.

It localises to the cytoplasm. The protein operates within cofactor biosynthesis; molybdopterin biosynthesis. Functionally, acts as a sulfur carrier required for molybdopterin biosynthesis. Component of the molybdopterin synthase complex that catalyzes the conversion of precursor Z into molybdopterin by mediating the incorporation of 2 sulfur atoms into precursor Z to generate a dithiolene group. In the complex, serves as sulfur donor by being thiocarboxylated (-COSH) at its C-terminus by MOCS3. After interaction with Mocs2B, the sulfur is then transferred to precursor Z to form molybdopterin. The chain is Molybdopterin synthase sulfur carrier subunit from Drosophila simulans (Fruit fly).